The chain runs to 178 residues: Meiotically up-regulated gene 95 protein (178 aa).

At 1 to 12 (MNLFVYIAQNPT) the chain is on the cytoplasmic side. A helical; Signal-anchor for type II membrane protein transmembrane segment spans residues 13-30 (LTKWFFCCVCTILTMPFF). Residues 31-178 (KKPYRKRGIS…ESIEKPENDN (148 aa)) are Lumenal-facing.

The protein resides in the endoplasmic reticulum membrane. Its function is as follows. Has a role in meiosis. The polypeptide is Meiotically up-regulated gene 95 protein (mug95) (Schizosaccharomyces pombe (strain 972 / ATCC 24843) (Fission yeast)).